The chain runs to 334 residues: GTPase Obg (334 aa).

One can recognise an Obg domain in the interval 1–159 (MRFVDEVVIK…KEVRLELNLL (159 aa)). The OBG-type G domain maps to 160-331 (ADVALLGLPN…LAKKLNEFLQ (172 aa)). GTP contacts are provided by residues 166 to 173 (GLPNAGKS), 191 to 195 (FTTMY), 212 to 215 (DIPG), 282 to 285 (NKID), and 312 to 314 (SAA). Mg(2+) is bound by residues Ser-173 and Thr-193.

This sequence belongs to the TRAFAC class OBG-HflX-like GTPase superfamily. OBG GTPase family. Monomer. Requires Mg(2+) as cofactor.

It is found in the cytoplasm. An essential GTPase which binds GTP, GDP and possibly (p)ppGpp with moderate affinity, with high nucleotide exchange rates and a fairly low GTP hydrolysis rate. Plays a role in control of the cell cycle, stress response, ribosome biogenesis and in those bacteria that undergo differentiation, in morphogenesis control. The chain is GTPase Obg from Francisella tularensis subsp. mediasiatica (strain FSC147).